The sequence spans 333 residues: Photosystem II assembly lipoprotein Ycf48 (333 aa).

A signal peptide spans 1–23; that stretch reads MTRFVSSAINLLLVLVLGVSLSG. Residue C24 is the site of N-palmitoyl cysteine attachment. C24 carries S-diacylglycerol cysteine lipidation.

Belongs to the Ycf48 family. As to quaternary structure, part of early PSII assembly complexes which includes D1 (psbA) and PsbI; not found in mature PSII. Binds to the lumenal side of PSII complexes. Interacts with YidC.

It is found in the cellular thylakoid membrane. In terms of biological role, a factor required for optimal assembly of photosystem II (PSII), acting in the early stages of PSII assembly. Also plays a role in replacement of photodamaged D1 (psbA). Assists YidC in synthesis of chlorophyll-binding proteins. The sequence is that of Photosystem II assembly lipoprotein Ycf48 from Parasynechococcus marenigrum (strain WH8102).